A 489-amino-acid polypeptide reads, in one-letter code: Rhamnulokinase (489 aa).

13 to 17 (ASSGR) lines the ATP pocket. C68 and C222 are oxidised to a cystine. Residues G83 and 236-238 (HDT) contribute to the substrate site. D237 (proton acceptor) is an active-site residue. T259 contributes to the ATP binding site. Residue N296 participates in substrate binding. Q304 contacts ATP. An intrachain disulfide couples C353 to C370. Residue G402 coordinates ATP. A disulfide bridge connects residues C413 and C417.

This sequence belongs to the rhamnulokinase family. It depends on Mg(2+) as a cofactor.

It catalyses the reaction L-rhamnulose + ATP = L-rhamnulose 1-phosphate + ADP + H(+). The protein operates within carbohydrate degradation; L-rhamnose degradation; glycerone phosphate from L-rhamnose: step 2/3. Its function is as follows. Involved in the catabolism of L-rhamnose (6-deoxy-L-mannose). Catalyzes the transfer of the gamma-phosphate group from ATP to the 1-hydroxyl group of L-rhamnulose to yield L-rhamnulose 1-phosphate. In Salmonella heidelberg (strain SL476), this protein is Rhamnulokinase.